We begin with the raw amino-acid sequence, 125 residues long: MSGRGKGGKAKAKAKSRSSRAGLQFPVGRIHRLLRKGNYAGRVGAGAPVYLAAVLEYLAAEVLELAGNAARDNKKSRIIPRHLQLAIRNDEELNKLLSGVTIAQGGVLPNIQAVLLPKKTQKAAK.

Residues Met1 to Ser18 are compositionally biased toward basic residues. The segment at Met1–Ala21 is disordered. Residue Ser2 is modified to N-acetylserine. The residue at position 104 (Gln104) is an N5-methylglutamine.

Belongs to the histone H2A family. The nucleosome is a histone octamer containing two molecules each of H2A, H2B, H3 and H4 assembled in one H3-H4 heterotetramer and two H2A-H2B heterodimers. The octamer wraps approximately 147 bp of DNA.

The protein resides in the nucleus. Its subcellular location is the chromosome. Core component of nucleosome. Nucleosomes wrap and compact DNA into chromatin, limiting DNA accessibility to the cellular machineries which require DNA as a template. Histones thereby play a central role in transcription regulation, DNA repair, DNA replication and chromosomal stability. DNA accessibility is regulated via a complex set of post-translational modifications of histones, also called histone code, and nucleosome remodeling. This Mytilus trossulus (Blue mussel) protein is Histone H2A.